Consider the following 87-residue polypeptide: Homeotic protein ultrabithorax (87 aa).

The Antp-type hexapeptide motif lies at 22-27 (FYPWMA).

The protein belongs to the Antp homeobox family. In the embryo, expression is seen in the epidermis, somatic and visceral mesoderm, and the peripheral and central nervous system.

The protein localises to the nucleus. Sequence-specific transcription factor which is part of a developmental regulatory system that provides cells with specific positional identities on the anterior-posterior axis. Binds the consensus region 5'-TTAAT[GT][GA]-3'. This homeotic protein controls development of the cells in the posterior thoracic and first abdominal segments. It activates the synthesis of the decapentaplegic (DPP) growth factor. This is Homeotic protein ultrabithorax (Ubx) from Drosophila hydei (Fruit fly).